A 439-amino-acid chain; its full sequence is Damage-control phosphatase ARMT1 (439 aa).

Ala-2 carries the N-acetylalanine modification. Position 4 is a phosphoserine (Ser-4). Lys-40 carries the N6-acetyllysine modification. The Mn(2+) site is built by Asp-251 and Asn-252. Asp-251 to Asn-252 contacts substrate. Residues Glu-256 and Asp-289 each coordinate S-adenosyl-L-methionine. Asp-289 is a binding site for Mn(2+). Residues Asp-365–Arg-369 and Lys-402 contribute to the substrate site. Residues Arg-399–Lys-402 carry the Subfamily III RTxK motif motif.

This sequence belongs to the damage-control phosphatase family. Sugar phosphate phosphatase III subfamily. Requires Mn(2+) as cofactor. Ni(2+) is required as a cofactor. In terms of processing, automethylated.

The catalysed reaction is beta-D-fructose 1-phosphate + H2O = D-fructose + phosphate. It catalyses the reaction beta-D-fructose 6-phosphate = dihydroxyacetone + D-glyceraldehyde 3-phosphate. The enzyme catalyses L-glutamyl-[protein] + S-adenosyl-L-methionine = [protein]-L-glutamate 5-O-methyl ester + S-adenosyl-L-homocysteine. Metal-dependent phosphatase that shows phosphatase activity against several substrates, including fructose-1-phosphate and fructose-6-phosphate. Its preference for fructose-1-phosphate, a strong glycating agent that causes DNA damage rather than a canonical yeast metabolite, suggests a damage-control function in hexose phosphate metabolism. Has also been shown to have O-methyltransferase activity that methylates glutamate residues of target proteins to form gamma-glutamyl methyl ester residues. Possibly methylates PCNA, suggesting it is involved in the DNA damage response. The sequence is that of Damage-control phosphatase ARMT1 from Mus musculus (Mouse).